Consider the following 303-residue polypeptide: Elongation factor Ts (303 aa).

The tract at residues 79-82 (TDFV) is involved in Mg(2+) ion dislocation from EF-Tu.

The protein belongs to the EF-Ts family.

Its subcellular location is the cytoplasm. In terms of biological role, associates with the EF-Tu.GDP complex and induces the exchange of GDP to GTP. It remains bound to the aminoacyl-tRNA.EF-Tu.GTP complex up to the GTP hydrolysis stage on the ribosome. This chain is Elongation factor Ts, found in Syntrophotalea carbinolica (strain DSM 2380 / NBRC 103641 / GraBd1) (Pelobacter carbinolicus).